A 968-amino-acid polypeptide reads, in one-letter code: Phosphoenolpyruvate carboxylase (968 aa).

Position 11 is a phosphoserine (serine 11). Catalysis depends on residues histidine 172 and lysine 602.

It belongs to the PEPCase type 1 family. Homotetramer. It depends on Mg(2+) as a cofactor.

Its subcellular location is the cytoplasm. The catalysed reaction is oxaloacetate + phosphate = phosphoenolpyruvate + hydrogencarbonate. With respect to regulation, by light-reversible phosphorylation. In terms of biological role, through the carboxylation of phosphoenolpyruvate (PEP) it forms oxaloacetate, a four-carbon dicarboxylic acid source for the tricarboxylic acid cycle. This is Phosphoenolpyruvate carboxylase from Phaseolus vulgaris (Kidney bean).